Consider the following 2351-residue polypeptide: Protein FAM186A (2351 aa).

Residues Glu296–Leu340 adopt a coiled-coil conformation. 8 disordered regions span residues Glu412–Arg460, Glu470–Lys489, Glu505–Gly538, Gln593–Ser667, Ser809–Ser838, Leu868–Glu976, Gly1805–Pro1837, and Phe1888–Gly1907. The span at Asp433–Phe446 shows a compositional bias: basic and acidic residues. The segment covering Ser472–Lys484 has biased composition (polar residues). Residues Met506–Ala520 are compositionally biased toward basic and acidic residues. Residues Leu527–Gly538 show a composition bias toward polar residues. The span at Gly603–Ile612 shows a compositional bias: basic residues. 2 stretches are compositionally biased toward basic and acidic residues: residues Ser619–Lys632 and Gln812–Gln823. A coiled-coil region spans residues Gln812–Asn860. Residues Glu824–Ser838 show a composition bias toward polar residues. Basic and acidic residues-rich tracts occupy residues Ala901–Gln912, Leu939–His955, and Lys964–Glu976. Positions Pro1816–Gly1835 are enriched in pro residues. The span at Ala1894–Gly1907 shows a compositional bias: polar residues.

It belongs to the FAM186 family.

This Homo sapiens (Human) protein is Protein FAM186A (FAM186A).